The sequence spans 362 residues: Peptide chain release factor 1 (362 aa).

The residue at position 237 (Gln-237) is an N5-methylglutamine. The span at 284-295 (EEEKRQAEETST) shows a compositional bias: basic and acidic residues. The tract at residues 284–304 (EEEKRQAEETSTRRNLVASGD) is disordered.

The protein belongs to the prokaryotic/mitochondrial release factor family. In terms of processing, methylated by PrmC. Methylation increases the termination efficiency of RF1.

Its subcellular location is the cytoplasm. Peptide chain release factor 1 directs the termination of translation in response to the peptide chain termination codons UAG and UAA. The sequence is that of Peptide chain release factor 1 from Pseudoalteromonas atlantica (strain T6c / ATCC BAA-1087).